The primary structure comprises 519 residues: MELVLLILVASLIGIAFLALQQHYSYWRRMGVREIRPKWIVGNLMGLLNMRMSPAEFISQLYNHPDAENEPFVGIHVFHKPALLLRDPEMVRNILVKDFAGFSNRYSSSDPKGDPLGSQNIFFLKNPAWKEVRLKLSPFFTGNRLKQMFPLIEEVGASLDAHLRQQPLHNERMRCFDLEAKELCALYTTDVIATVAYGVSANSFTDPKCEFRRHGRSVFEFNLLRAAEFTLVFFLPHLVPFVRFKVVPAEATRFLRKTINYVMSEREKSGQKRNDLIDILIEFRRSTQLAKASGIKDQFVFEGDILVAQAVLFFTAGFESSSSTMAFAMYELAKDTDVQQRLREEIKDALVESGGQVTLKMIESLEFMQMILLEVLRMYPPLPFLDRECTSGRDYSLAPFHKKFVVPKGMPVYIPCYALHMDPQYFPQPRKFLPERFSPENRKLHTPYTYMPFGLGPHGCIGERFGYLQAKVGLVNLLRNHMITTSERTPHRMQLDPKAIITQAKGGIHLRLVRDALGV.

Position 460 (C460) interacts with heme.

Belongs to the cytochrome P450 family. It depends on heme as a cofactor.

Its subcellular location is the endoplasmic reticulum membrane. It localises to the microsome membrane. Its function is as follows. May be involved in the metabolism of insect hormones and in the breakdown of synthetic insecticides. This chain is Probable cytochrome P450 6g2 (Cyp6g2), found in Drosophila melanogaster (Fruit fly).